Reading from the N-terminus, the 475-residue chain is Eukaryotic translation initiation factor 2 subunit 3 (475 aa).

The region spanning 38–247 is the tr-type G domain; it reads QATINIGTIG…IVNKIPVPPR (210 aa). Residues 47-54 are G1; sequence GHVAHGKS. Residue 50–55 participates in GTP binding; sequence AHGKST. Positions 75-79 are G2; that stretch reads NITIK. Positions 133 to 136 are G3; it reads DCPG. GTP is bound by residues 189-192 and 224-226; these read NKID and SAQ. The interval 189 to 192 is G4; it reads NKID. A G5 region spans residues 224–226; that stretch reads SAQ. Positions 456 to 468 are interacts with CDC123; sequence GQIFGGKTITPVL.

This sequence belongs to the TRAFAC class translation factor GTPase superfamily. Classic translation factor GTPase family. EIF2G subfamily. As to quaternary structure, eukaryotic translation initiation factor 2 eIF2 is a heterotrimeric complex composed of an alpha, a beta and a gamma subunit. The factors eIF-1, eIF-2, eIF-3, TIF5/eIF-5 and methionyl-tRNAi form a multifactor complex (MFC) that may bind to the 40S ribosome.

The protein resides in the cytoplasm. It is found in the cytosol. The catalysed reaction is GTP + H2O = GDP + phosphate + H(+). In terms of biological role, as a subunit of eukaryotic initiation factor 2 eIF2, involved in the early steps of protein synthesis. In the presence of GTP, eIF-2 forms a ternary complex with initiator tRNA Met-tRNAi and then recruits the 40S ribosomal complex and initiation factors eIF-1, eIF-1A and eIF-3 to form the 43S pre-initiation complex (43S PIC), a step that determines the rate of protein translation. The 43S PIC binds to mRNA and scans downstream to the initiation codon, where it forms a 48S initiation complex by codon-anticodon base pairing. This leads to the displacement of eIF-1 to allow GTPase-activating protein (GAP) eIF-5-mediated hydrolysis of eIF2-bound GTP. Hydrolysis of GTP and release of Pi, which makes GTP hydrolysis irreversible, causes the release of the eIF-2-GDP binary complex from the 40S subunit, an event that is essential for the subsequent joining of the 60S ribosomal subunit to form an elongation-competent 80S ribosome. In order for eIF-2 to recycle and catalyze another round of initiation, the GDP bound to eIF-2 must be exchanged with GTP by way of a reaction catalyzed by GDP-GTP exchange factor (GEF) eIF-2B. This chain is Eukaryotic translation initiation factor 2 subunit 3, found in Drosophila melanogaster (Fruit fly).